We begin with the raw amino-acid sequence, 473 residues long: Ribosomal RNA small subunit methyltransferase F (473 aa).

S-adenosyl-L-methionine-binding positions include 124 to 130 (ASAPGSK), Glu-148, Asp-175, and Asp-193. Catalysis depends on Cys-246, which acts as the Nucleophile.

It belongs to the class I-like SAM-binding methyltransferase superfamily. RsmB/NOP family.

The protein resides in the cytoplasm. It catalyses the reaction cytidine(1407) in 16S rRNA + S-adenosyl-L-methionine = 5-methylcytidine(1407) in 16S rRNA + S-adenosyl-L-homocysteine + H(+). Its function is as follows. Specifically methylates the cytosine at position 1407 (m5C1407) of 16S rRNA. In Aliivibrio fischeri (strain MJ11) (Vibrio fischeri), this protein is Ribosomal RNA small subunit methyltransferase F.